Consider the following 310-residue polypeptide: ADP-L-glycero-D-manno-heptose-6-epimerase (310 aa).

Residues 10 to 11, 31 to 32, Lys-38, Lys-53, 75 to 79, and Asn-92 contribute to the NADP(+) site; these read FI, DN, and EGACS. Catalysis depends on Tyr-140, which acts as the Proton acceptor. Residue Lys-144 participates in NADP(+) binding. Substrate is bound at residue Asn-169. NADP(+)-binding residues include Val-170 and Lys-178. Residue Lys-178 is the Proton acceptor of the active site. Substrate contacts are provided by residues Ser-180, His-187, 201–204, Arg-209, and Tyr-272; that span reads FSGS.

It belongs to the NAD(P)-dependent epimerase/dehydratase family. HldD subfamily. As to quaternary structure, homopentamer. NADP(+) is required as a cofactor.

The catalysed reaction is ADP-D-glycero-beta-D-manno-heptose = ADP-L-glycero-beta-D-manno-heptose. Its pathway is nucleotide-sugar biosynthesis; ADP-L-glycero-beta-D-manno-heptose biosynthesis; ADP-L-glycero-beta-D-manno-heptose from D-glycero-beta-D-manno-heptose 7-phosphate: step 4/4. Its function is as follows. Catalyzes the interconversion between ADP-D-glycero-beta-D-manno-heptose and ADP-L-glycero-beta-D-manno-heptose via an epimerization at carbon 6 of the heptose. The protein is ADP-L-glycero-D-manno-heptose-6-epimerase of Pectobacterium carotovorum subsp. carotovorum (strain PC1).